The sequence spans 289 residues: MVSQFAIEVRNLTYKFKESSDPSVVDINLQIPWNTRSLVVGANGAGKSTLLKLLSGKHLCLDGKILVNGLDPFSPLSMNQVDDDESVEDSTNYQTTTYLGTEWCHMSIINRDIGVLELLKSIGFDHFRERGERLVRILDIDVRWRMHRLSDGQKRRVQLAMGLLKPWRVLLLDEVTVDLDVIARARLLEFLKWETETRRCSVVYATHIFDGLAKWPNQVYHMKSGKIVDNLDYQKDVEFSEVVNAKVNGQVAFENDNNKVVISKVNSLHPLALEWLKRDNQIPDKEIGI.

In terms of domain architecture, ABC transporter spans 7–249; the sequence is IEVRNLTYKF…SEVVNAKVNG (243 aa). 41–48 provides a ligand contact to ATP; that stretch reads GANGAGKS.

This sequence belongs to the ABC transporter superfamily. As to quaternary structure, interacts with CCR4 and SSN2.

It localises to the cytoplasm. Its subcellular location is the nucleus. The protein is CCR4-associated factor 16 (CAF16) of Saccharomyces cerevisiae (strain ATCC 204508 / S288c) (Baker's yeast).